A 67-amino-acid chain; its full sequence is ATP synthase protein 8 (67 aa).

The chain crosses the membrane as a helical span at residues 8 to 24 (TWSITIMSMIMTLFIVF). Position 54 is an N6-acetyllysine; alternate (Lys-54). N6-succinyllysine; alternate is present on Lys-54. Lys-57 carries the post-translational modification N6-acetyllysine.

Belongs to the ATPase protein 8 family. As to quaternary structure, F-type ATPases have 2 components, CF(1) - the catalytic core - and CF(0) - the membrane proton channel. Component of an ATP synthase complex composed of ATP5PB, ATP5MC1, ATP5F1E, ATP5PD, ATP5ME, ATP5PF, ATP5MF, MT-ATP6, MT-ATP8, ATP5F1A, ATP5F1B, ATP5F1D, ATP5F1C, ATP5PO, ATP5MG, ATP5MK and ATP5MJ. Interacts with PRICKLE3.

The protein localises to the mitochondrion membrane. Its function is as follows. Mitochondrial membrane ATP synthase (F(1)F(0) ATP synthase or Complex V) produces ATP from ADP in the presence of a proton gradient across the membrane which is generated by electron transport complexes of the respiratory chain. F-type ATPases consist of two structural domains, F(1) - containing the extramembraneous catalytic core and F(0) - containing the membrane proton channel, linked together by a central stalk and a peripheral stalk. During catalysis, ATP synthesis in the catalytic domain of F(1) is coupled via a rotary mechanism of the central stalk subunits to proton translocation. Part of the complex F(0) domain. Minor subunit located with subunit a in the membrane. This is ATP synthase protein 8 (MT-ATP8) from Felis silvestris lybica (African wildcat).